The chain runs to 79 residues: Small ribosomal subunit protein bS18 (79 aa).

It belongs to the bacterial ribosomal protein bS18 family. In terms of assembly, part of the 30S ribosomal subunit. Forms a tight heterodimer with protein bS6.

In terms of biological role, binds as a heterodimer with protein bS6 to the central domain of the 16S rRNA, where it helps stabilize the platform of the 30S subunit. This Aster yellows witches'-broom phytoplasma (strain AYWB) protein is Small ribosomal subunit protein bS18.